Here is a 638-residue protein sequence, read N- to C-terminus: Ubiquilin-2 (638 aa).

Residues 1–26 are compositionally biased toward low complexity; that stretch reads MAENGESSGPPRPSRGPAAAPGAASP. Disordered stretches follow at residues 1–31 and 107–158; these read MAENGESSGPPRPSRGPAAAPGAASPPAEPK and RPQG…SSFG. Residue Ala-2 is modified to N-acetylalanine. Ser-25 carries the phosphoserine modification. One can recognise a Ubiquitin-like domain in the interval 33–107; the sequence is IKVTVKTPKE…VHLVIKSQNR (75 aa). Over residues 112–158 the composition is skewed to low complexity; the sequence is ATTQPSTTAGTSTTTTTTTTAAAPAATTSSAPRSSSTPTTTNSSSFG. STI1 domains are found at residues 189–217 and 219–258; these read SPEMMIQIMENPFVQSMLSNPDLMRQLIM and NPQMQQLIQRNPEISHLLNNPDIMRQTLEIARNPAMMQEM. The tract at residues 298 to 364 is disordered; that stretch reads FGGNPFATVG…SGSSSSSTTA (67 aa). Low complexity predominate over residues 305 to 316; that stretch reads TVGSSSTSGEGT. Positions 327-336 are enriched in pro residues; that stretch reads LPNPWAPPPT. Positions 337–364 are enriched in low complexity; that stretch reads TQTAATTTTTTTTSSGSGSGSSSSSTTA. STI1 domains lie at 393-440 and 444-476; these read NPQL…QEQM and LPNFLQQMQNPETIAAMSNPRAMQALMQIQQGL. Repeat copies occupy residues 505-507, 508-510, 511-513, 514-516, 517-519, 520-522, 523-525, 526-528, 529-531, 532-533, and 535-537. The interval 505–537 is 11 X 3 AA tandem repeats P-X-X; the sequence is PVGPVTPIGPIGPIVPFTPIGPIGPIGPTGPAS. A disordered region spans residues 528-570; that stretch reads GPIGPTGPASSPGSTGTGIPPATTVSSSAPTETISPTSESGPN. Residues 533–551 are compositionally biased toward low complexity; that stretch reads TGPASSPGSTGTGIPPATT. Residues 552–570 are compositionally biased toward polar residues; that stretch reads VSSSAPTETISPTSESGPN. The 47-residue stretch at 589–635 folds into the UBA domain; sequence PPNPEVRFQQQLEQLNAMGFLNREANLQALIATGGDINAAIERLLGS.

As to quaternary structure, homodimer. Forms heterodimer with UBQLN1. Binds UBE3A and BTRC. Interacts with the 19S proteasome subunit. Interacts with C9orf72. Binds CD47. Interacts with HNRNPA1 and HNRNPU. Found in a complex with UBQLN1 and MAP1LC3A/B/C. Interacts with EPS15, EPN1 and EPN2. Interacts with HERPUD1. Interacts with RAD23A. Interacts with TARDBP. Interacts (via C-terminus) with FAF2 (via N-terminus). Interacts with UBQLN4. Post-translationally, degraded during macroautophagy. Highly expressed in smooth muscle. Expression in other tissues is very low.

The protein localises to the cytoplasm. Its subcellular location is the nucleus. It is found in the membrane. The protein resides in the cytoplasmic vesicle. It localises to the autophagosome. Functionally, plays an important role in the regulation of different protein degradation mechanisms and pathways including ubiquitin-proteasome system (UPS), autophagy and the endoplasmic reticulum-associated protein degradation (ERAD) pathway. Mediates the proteasomal targeting of misfolded or accumulated proteins for degradation by binding (via UBA domain) to their polyubiquitin chains and by interacting (via ubiquitin-like domain) with the subunits of the proteasome. Plays a role in the ERAD pathway via its interaction with ER-localized proteins FAF2/UBXD8 and HERPUD1 and may form a link between the polyubiquitinated ERAD substrates and the proteasome. Involved in the regulation of macroautophagy and autophagosome formation; required for maturation of autophagy-related protein LC3 from the cytosolic form LC3-I to the membrane-bound form LC3-II and may assist in the maturation of autophagosomes to autolysosomes by mediating autophagosome-lysosome fusion. Negatively regulates the endocytosis of GPCR receptors: AVPR2 and ADRB2, by specifically reducing the rate at which receptor-arrestin complexes concentrate in clathrin-coated pits (CCPs). Links CD47 to vimentin-containing intermediate filaments of the cytoskeleton. The polypeptide is Ubiquilin-2 (Ubqln2) (Mus musculus (Mouse)).